The sequence spans 157 residues: MFDVLMYLFETYIHNEVEMRVDQDKLTDDLTQAGFHQDDIYNALNWLEKLADLQDGTGRAFALNADPLAMRIYTDEESQFLDTDCRGFLLFLEQIQVLNLETREMVIDRVMALDAAEFDLEDLKWVILMVLFNIPGCENAYQQMEDLVFEEDEQHLH.

This sequence belongs to the Smg family.

The protein is Protein Smg of Sodalis glossinidius (strain morsitans).